We begin with the raw amino-acid sequence, 541 residues long: MHWQTHTVFNQPIPLNNSNLYLSDGALCEAVTREGAGWDSDFLASIGQQLGTAESLELGRLANVNPPELLRYDAQGRRLDDVRFHPAWHLLMQALCTNRVHNLAWEEDARSGAFVARAARFMLHAQVEAGSLCPITMTFAATPLLLQMLPAPFQDWTTPLLSDRYDSHLLPGGQKRGLLIGMGMTEKQGGSDVMSNTTRAERLEDGSYRLVGHKWFFSVPQSDAHLVLAQTAGGLSCFFVPRFLPDGQRNAIRLERLKDKLGNRSNASCEVEFQDAIGWLLGLEGEGIRLILKMGGMTRFDCALGSHAMMRRAFSLAIYHAHQRHVFGNPLIQQPLMRHVLSRMALQLEGQTALLFRLARAWDRRADAKEALWARLFTPAAKFVICKRGMPFVAEAMEVLGGIGYCEESELPRLYREMPVNSIWEGSGNIMCLDVLRVLNKQAGVYDLLSEAFVEVKGQDRYFDRAVRRLQQQLRKPAEELGREITHQLFLLGCGAQMLKYASPPMAQAWCQVMLDTRGGVRLSEQIQNDLLLRATGGVCV.

FAD is bound by residues methionine 182–serine 191, threonine 185, serine 191, phenylalanine 216–serine 218, serine 218, isoleucine 423–leucine 433, and asparagine 429. Residues valine 445–valine 541 are dsDNA-binding.

Belongs to the acyl-CoA dehydrogenase family. In terms of assembly, homotetramer. Dimer of dimers. It depends on FAD as a cofactor.

It is found in the cytoplasm. Part of the adaptive DNA-repair response to alkylating agents. Could prevent alkylation damage by protecting DNA and destroying alkylating agents that have yet to reach their DNA target. Binds to double-stranded DNA with a preference for a DNA region that includes its own promoter. Shows weak isovaleryl-CoA dehydrogenase activity in vitro. The protein is Putative acyl-CoA dehydrogenase AidB (aidB) of Escherichia coli (strain K12).